Consider the following 301-residue polypeptide: D-alanine--D-alanine ligase (301 aa).

The region spanning 101–296 (KLMWRAAGLA…YPTLVRRVLE (196 aa)) is the ATP-grasp domain. An ATP-binding site is contributed by 127-182 (EEELGLPLFVKPAREGSSIGVTKVKERGALKAAYEEAARHDPLVIAEKGVMGGEYT). The Mg(2+) site is built by Asp-250, Glu-263, and Asn-265.

It belongs to the D-alanine--D-alanine ligase family. The cofactor is Mg(2+). Requires Mn(2+) as cofactor.

It is found in the cytoplasm. The enzyme catalyses 2 D-alanine + ATP = D-alanyl-D-alanine + ADP + phosphate + H(+). The protein operates within cell wall biogenesis; peptidoglycan biosynthesis. In terms of biological role, cell wall formation. The protein is D-alanine--D-alanine ligase of Dechloromonas aromatica (strain RCB).